The sequence spans 683 residues: Long-chain-fatty-acid--CoA ligase 5 (683 aa).

Residues 12 to 32 (LPTPALICILTFGAAIFLWLI) traverse the membrane as a helical; Signal-anchor for type III membrane protein segment. Phosphoserine is present on isoleucine 32. Over 33-683 (TRPQPVLPLL…IDSLYEHIQD (651 aa)) the chain is Cytoplasmic. Residue lysine 361 is modified to N6-acetyllysine.

This sequence belongs to the ATP-dependent AMP-binding enzyme family. It depends on Mg(2+) as a cofactor.

The protein resides in the mitochondrion. Its subcellular location is the endoplasmic reticulum. It localises to the mitochondrion outer membrane. The protein localises to the endoplasmic reticulum membrane. It is found in the cell membrane. The enzyme catalyses a long-chain fatty acid + ATP + CoA = a long-chain fatty acyl-CoA + AMP + diphosphate. The catalysed reaction is (5Z,8Z,11Z,14Z)-eicosatetraenoate + ATP + CoA = (5Z,8Z,11Z,14Z)-eicosatetraenoyl-CoA + AMP + diphosphate. It catalyses the reaction hexadecanoate + ATP + CoA = hexadecanoyl-CoA + AMP + diphosphate. It carries out the reaction (E)-hexadec-2-enoate + ATP + CoA = (2E)-hexadecenoyl-CoA + AMP + diphosphate. The enzyme catalyses 15-hydroxy-(5Z,8Z,11Z,13E)-eicosatetraenoate + ATP + CoA = 15-hydroxy-(5Z,8Z,11Z,13E)-eicosatetraenoyl-CoA + AMP + diphosphate. The catalysed reaction is 12-hydroxy-(5Z,8Z,10E,14Z)-eicosatetraenoate + ATP + CoA = 12-hydroxy-(5Z,8Z,10E,14Z)-eicosatetraenoyl-CoA + AMP + diphosphate. It catalyses the reaction 5-hydroxy-(6E,8Z,11Z,14Z)-eicosatetraenoate + ATP + CoA = 5-hydroxy-(6E,8Z,11Z,14Z)-eicosatetraenoyl-CoA + AMP + diphosphate. It carries out the reaction 14,15-epoxy-(5Z,8Z,11Z)-eicosatrienoate + ATP + CoA = 14,15-epoxy-(5Z,8Z,11Z)-eicosatrienoyl-CoA + AMP + diphosphate. The enzyme catalyses 11,12-epoxy-(5Z,8Z,14Z)-eicosatrienoate + ATP + CoA = 11,12-epoxy-(5Z,8Z,14Z)-eicosatrienoyl-CoA + AMP + diphosphate. The catalysed reaction is (9Z)-octadecenoate + ATP + CoA = (9Z)-octadecenoyl-CoA + AMP + diphosphate. Catalyzes the conversion of long-chain fatty acids to their active form acyl-CoAs for both synthesis of cellular lipids, and degradation via beta-oxidation. ACSL5 may activate fatty acids from exogenous sources for the synthesis of triacylglycerol destined for intracellular storage. Utilizes a wide range of saturated fatty acids with a preference for C16-C18 unsaturated fatty acids. It was suggested that it may also stimulate fatty acid oxidation. At the villus tip of the crypt-villus axis of the small intestine may sensitize epithelial cells to apoptosis specifically triggered by the death ligand TRAIL. May have a role in the survival of glioma cells. The protein is Long-chain-fatty-acid--CoA ligase 5 of Homo sapiens (Human).